The chain runs to 466 residues: tRNA-2-methylthio-N(6)-dimethylallyladenosine synthase (466 aa).

In terms of domain architecture, MTTase N-terminal spans 3-123 (KKLYIKTYGC…LPEMVARAVR (121 aa)). The [4Fe-4S] cluster site is built by C12, C48, C86, C162, C166, and C169. Positions 148–381 (SPAGPSAFLS…QQLLTAQQTA (234 aa)) constitute a Radical SAM core domain. The 63-residue stretch at 384–446 (TACVGRVQPV…ANSLSGTVVV (63 aa)) folds into the TRAM domain.

It belongs to the methylthiotransferase family. MiaB subfamily. As to quaternary structure, monomer. [4Fe-4S] cluster is required as a cofactor.

It localises to the cytoplasm. The catalysed reaction is N(6)-dimethylallyladenosine(37) in tRNA + (sulfur carrier)-SH + AH2 + 2 S-adenosyl-L-methionine = 2-methylsulfanyl-N(6)-dimethylallyladenosine(37) in tRNA + (sulfur carrier)-H + 5'-deoxyadenosine + L-methionine + A + S-adenosyl-L-homocysteine + 2 H(+). Catalyzes the methylthiolation of N6-(dimethylallyl)adenosine (i(6)A), leading to the formation of 2-methylthio-N6-(dimethylallyl)adenosine (ms(2)i(6)A) at position 37 in tRNAs that read codons beginning with uridine. This is tRNA-2-methylthio-N(6)-dimethylallyladenosine synthase from Rhodospirillum centenum (strain ATCC 51521 / SW).